Reading from the N-terminus, the 396-residue chain is Activity-regulated cytoskeleton-associated protein (396 aa).

Residues 54–78 adopt a coiled-coil conformation; it reads SKQVERELKGLHRSVGKLENNLDGY. Residues 89 to 100 form an interaction with SH3GL1 or SH3GL3 region; that stretch reads KSIKACLCRCQE. Residues 195–214 form an interaction with DNM2 region; that stretch reads QSWVPGEDGQPSPGVDTQIF. Phosphoserine is present on serine 260. Residues lysine 268 and lysine 269 each participate in a glycyl lysine isopeptide (Lys-Gly) (interchain with G-Cter in ubiquitin) cross-link. Threonine 278 carries the phosphothreonine modification. Residues 358–396 form a disordered region; the sequence is GLEQAAEPSVTPLPTEDETEALTPALTSESVASDRTQPE. Residues 382-396 are compositionally biased toward polar residues; that stretch reads ALTSESVASDRTQPE.

Belongs to the ARC/ARG3.1 family. In terms of assembly, homooligomer; homooligomerizes into virion-like capsids. Interacts with SH3GL1/endophilin-2, SH3GL3/endophilin-3 and DNM2/DYN2. Interacts with CAMK2B (in the kinase inactive state); leading to target ARC to inactive synapses. Interacts with PSEN1. Interacts with GRIN2A and GRIN2B; inhibiting homooligomerization. Palmitoylation anchors the protein into the membrane by allowing direct insertion into the hydrophobic core of the lipid bilayer. In terms of processing, ubiquitinated by UBE3A, leading to its degradation by the proteasome, thereby promoting AMPA receptors (AMPARs) expression at synapses. Ubiquitinated by RNF216 at Lys-268 and Lys-269 limiting ARC protein levels induced by synaptic activity and thus regulating ARC-dependent forms of synaptic plasticity. Post-translationally, phosphorylation at Ser-260 by CaMK2 prevents homooligomerization into virion-like capsids by disrupting an interaction surface essential for high-order oligomerization. Phosphorylation by CaMK2 inhibits synaptic activity. As to expression, expressed exclusively in certain parts of the brain including cortex and molecular layer of the hippocampus. Typically expressed at high level in a minority of neurons. Basal expression higher in cortex than in hippocampus, highest in visual cortex.

Its subcellular location is the extracellular vesicle membrane. It localises to the postsynaptic cell membrane. The protein resides in the synapse. It is found in the postsynaptic density. The protein localises to the early endosome membrane. Its subcellular location is the cell projection. It localises to the dendrite. The protein resides in the cytoplasm. It is found in the cytoskeleton. The protein localises to the cell cortex. Its subcellular location is the dendritic spine. It localises to the cytoplasmic vesicle. The protein resides in the secretory vesicle. It is found in the acrosome. The protein localises to the clathrin-coated vesicle membrane. Master regulator of synaptic plasticity that self-assembles into virion-like capsids that encapsulate RNAs and mediate intercellular RNA transfer in the nervous system. ARC protein is released from neurons in extracellular vesicles that mediate the transfer of ARC mRNA into new target cells, where ARC mRNA can undergo activity-dependent translation. ARC capsids are endocytosed and are able to transfer ARC mRNA into the cytoplasm of neurons. Acts as a key regulator of synaptic plasticity: required for protein synthesis-dependent forms of long-term potentiation (LTP) and depression (LTD) and for the formation of long-term memory. Regulates synaptic plasticity by promoting endocytosis of AMPA receptors (AMPARs) in response to synaptic activity: this endocytic pathway maintains levels of surface AMPARs in response to chronic changes in neuronal activity through synaptic scaling, thereby contributing to neuronal homeostasis. Acts as a postsynaptic mediator of activity-dependent synapse elimination in the developing cerebellum by mediating elimination of surplus climbing fiber synapses. Accumulates at weaker synapses, probably to prevent their undesired enhancement. This suggests that ARC-containing virion-like capsids may be required to eliminate synaptic material. Required to transduce experience into long-lasting changes in visual cortex plasticity and for long-term memory. Involved in postsynaptic trafficking and processing of amyloid-beta A4 (APP) via interaction with PSEN1. In addition to its role in synapses, also involved in the regulation of the immune system: specifically expressed in skin-migratory dendritic cells and regulates fast dendritic cell migration, thereby regulating T-cell activation. The chain is Activity-regulated cytoskeleton-associated protein from Rattus norvegicus (Rat).